Here is a 185-residue protein sequence, read N- to C-terminus: Neuronal vesicle trafficking-associated protein 1 (185 aa).

Residues 1–82 (MVKLGNNFAE…ITEGVTERFK (82 aa)) lie on the Cytoplasmic side of the membrane. The chain crosses the membrane as a helical; Signal-anchor for type II membrane protein span at residues 83–103 (VSVLVLFALAFLTCVVFLVVY). Over 104–185 (KVYKYDRACP…QETEAAEKSA (82 aa)) the chain is Lumenal. The interval 129-164 (ESYYTEQDSSAREKFYTVINHYNVAKQSITRSVSPW) is required for GRIP1 interaction.

This sequence belongs to the NSG family. As to quaternary structure, forms a complex with GRIP1, GRIA2 and STX12 through direct interaction with GRIP1; controls the intracellular fate of AMPAR and the endosomal sorting of the GRIA2 subunit toward recycling and membrane targeting. Interacts with STX12. Interacts with APP; could regulate APP processing. Interacts with FAM171A1. In terms of tissue distribution, pituitary and less in adrenal gland and testis. Expressed in the hippocampus throughout development. At P0, highly and broadly expressed throughout the cortical plate, but is down-regulated overall at P8 and P14, but remains relatively enriched in layer V. At P0 is expressed ubiquitously in the developing cerebellum namely Purkinje neurons as well as granule neurons. However, it becomes restricted to Purkinje cells by P8. This exclusive expression in Purkinje cells is maintained throughout adulthood.

It localises to the membrane. Its subcellular location is the golgi apparatus. It is found in the trans-Golgi network membrane. The protein localises to the endosome membrane. The protein resides in the cell projection. It localises to the dendrite. Its subcellular location is the early endosome membrane. It is found in the late endosome membrane. The protein localises to the lysosome lumen. The protein resides in the recycling endosome membrane. It localises to the cytoplasmic vesicle membrane. Its subcellular location is the golgi stack membrane. It is found in the endosome. The protein localises to the multivesicular body membrane. The protein resides in the endoplasmic reticulum membrane. Functionally, plays a role in the recycling mechanism in neurons of multiple receptors, including AMPAR, APP and L1CAM and acts at the level of early endosomes to promote sorting of receptors toward a recycling pathway. Regulates sorting and recycling of GRIA2 through interaction with GRIP1 and then contributes to the regulation of synaptic transmission and plasticity by affecting the recycling and targeting of AMPA receptors to the synapse. Is required for faithful sorting of L1CAM to axons by facilitating trafficking from somatodendritic early endosome or the recycling endosome. In an other hand, induces apoptosis via the activation of CASP3 in response to DNA damage. In Mus musculus (Mouse), this protein is Neuronal vesicle trafficking-associated protein 1.